Here is a 369-residue protein sequence, read N- to C-terminus: H-2 class I histocompatibility antigen, K-B alpha chain (369 aa).

Residues 1–21 form the signal peptide; sequence MVPCTLLLLLAAALAPTQTRA. The alpha-1 stretch occupies residues 22-111; sequence GPHSLRYFVT…LLGYYNQSKG (90 aa). Over 22–305 the chain is Extracellular; that stretch reads GPHSLRYFVT…EPPPSTVSNM (284 aa). Residue asparagine 107 is glycosylated (N-linked (GlcNAc...) asparagine). Positions 112 to 203 are alpha-2; it reads GSHTIQVISG…KNGNATLLRT (92 aa). A disulfide bridge links cysteine 122 with cysteine 185. Asparagine 197 carries an N-linked (GlcNAc...) asparagine glycan. The tract at residues 204–295 is alpha-3; the sequence is DSPKAHVTHH…GLPEPLTLRW (92 aa). Positions 206–294 constitute an Ig-like C1-type domain; that stretch reads PKAHVTHHSR…QGLPEPLTLR (89 aa). Cysteines 224 and 280 form a disulfide. The tract at residues 296-305 is connecting peptide; sequence EPPPSTVSNM. The helical transmembrane segment at 306–328 threads the bilayer; it reads ATVAVLVVLGAAIVTGAVVAFVM. Residues 329 to 369 are Cytoplasmic-facing; it reads KMRRRNTGGKGGDYALAPGSQTSDLSLPDCKVMVHDPHSLA. 2 positions are modified to phosphoserine: serine 351 and serine 354.

Belongs to the MHC class I family. In terms of assembly, heterodimer of an alpha chain and a beta chain (beta-2-microglobulin).

The protein resides in the membrane. Its function is as follows. Involved in the presentation of foreign antigens to the immune system. The protein is H-2 class I histocompatibility antigen, K-B alpha chain (H2-K1) of Mus musculus (Mouse).